A 301-amino-acid polypeptide reads, in one-letter code: t-SNARE affecting a late Golgi compartment protein 2 (301 aa).

Over 1–279 the chain is Cytoplasmic; the sequence is MAYRDRTGLY…SHQKNTGRLR (279 aa). Residues 92–120 adopt a coiled-coil conformation; that stretch reads SDKTEQENEIQRLTIQITQDFQRCQKLLQ. A t-SNARE coiled-coil homology domain is found at 206-268; that stretch reads DEQAIRHERA…KSAEKELIKA (63 aa). The chain crosses the membrane as a helical; Anchor for type IV membrane protein span at residues 280–300; sequence FICFLILLIVALIVILAIKLL. Residue Arg301 is a topological domain, vesicular.

This sequence belongs to the syntaxin family.

It localises to the golgi apparatus. It is found in the trans-Golgi network membrane. The protein resides in the endosome membrane. T-SNARE that functions in transport from the endosome to the late Golgi and on the endocytic pathway. The polypeptide is t-SNARE affecting a late Golgi compartment protein 2 (tlg2) (Schizosaccharomyces pombe (strain 972 / ATCC 24843) (Fission yeast)).